Reading from the N-terminus, the 154-residue chain is Ribosomal RNA large subunit methyltransferase H (154 aa).

S-adenosyl-L-methionine-binding positions include leucine 70, glycine 102, and 121-126 (LSRMTL).

It belongs to the RNA methyltransferase RlmH family. As to quaternary structure, homodimer.

It is found in the cytoplasm. It carries out the reaction pseudouridine(1915) in 23S rRNA + S-adenosyl-L-methionine = N(3)-methylpseudouridine(1915) in 23S rRNA + S-adenosyl-L-homocysteine + H(+). Functionally, specifically methylates the pseudouridine at position 1915 (m3Psi1915) in 23S rRNA. This Citrifermentans bemidjiense (strain ATCC BAA-1014 / DSM 16622 / JCM 12645 / Bem) (Geobacter bemidjiensis) protein is Ribosomal RNA large subunit methyltransferase H.